The primary structure comprises 179 residues: Large ribosomal subunit protein uL5 (179 aa).

It belongs to the universal ribosomal protein uL5 family. In terms of assembly, part of the 50S ribosomal subunit; part of the 5S rRNA/L5/L18/L25 subcomplex. Contacts the 5S rRNA and the P site tRNA. Forms a bridge to the 30S subunit in the 70S ribosome.

This is one of the proteins that bind and probably mediate the attachment of the 5S RNA into the large ribosomal subunit, where it forms part of the central protuberance. In the 70S ribosome it contacts protein S13 of the 30S subunit (bridge B1b), connecting the 2 subunits; this bridge is implicated in subunit movement. Contacts the P site tRNA; the 5S rRNA and some of its associated proteins might help stabilize positioning of ribosome-bound tRNAs. This Microcystis aeruginosa (strain NIES-843 / IAM M-2473) protein is Large ribosomal subunit protein uL5.